Consider the following 353-residue polypeptide: Chemerin-like receptor 2 (353 aa).

The Extracellular portion of the chain corresponds to 1-41 (MEVSREMLFEELDNYSYALEYYSQEPDAEENVYPGIVHWIS). Residue asparagine 14 is glycosylated (N-linked (GlcNAc...) asparagine). A helical membrane pass occupies residues 42–62 (LLLYALAFVLGIPGNAIVIWF). Residues 63–73 (MGFKWKKTVTT) are Cytoplasmic-facing. The chain crosses the membrane as a helical span at residues 74–94 (LWFLNLAIADFVFVLFLPLYI). The Extracellular portion of the chain corresponds to 95 to 112 (SYVALSFHWPFGRWLCKL). Residues cysteine 110 and cysteine 187 are joined by a disulfide bond. Residues 113 to 133 (NSFIAQLNMFSSVFFLTVISL) form a helical membrane-spanning segment. At 134 to 154 (DRYIHLIHPGLSHPHRTLKNS) the chain is on the cytoplasmic side. The chain crosses the membrane as a helical span at residues 155–175 (LLVVLFVWLLASLLGGPTLYF). Topologically, residues 176 to 210 (RDTVEVNNRIICYNNFQEYELTLMRHHVLTWVKFL) are extracellular. Residues 211-231 (FGYLLPLLTMSSCYLCLIFKT) traverse the membrane as a helical segment. The Cytoplasmic portion of the chain corresponds to 232–247 (KKQNILISSKHLWMIL). A helical transmembrane segment spans residues 248 to 268 (SVVIAFMVCWTPFHLFSIWEL). The Extracellular segment spans residues 269–286 (SIHHNSSFQNVLQGGIPL). The helical transmembrane segment at 287–307 (STGLAFLNSCLNPILYVLISK) threads the bilayer. The Cytoplasmic portion of the chain corresponds to 308–353 (KFQARFRASVAEVLKRSLWEASCSGTVSEQLRSAETKSLSLLETAQ).

It belongs to the chemokine-like receptor (CMKLR) family.

It localises to the cell membrane. Receptor for chemoattractant adipokine chemerin/RARRES2 suggesting a role for this receptor in the regulation of inflammation and energy homesotasis. Signals mainly via beta-arrestin pathway. Binding of RARRES2 activates weakly G proteins, calcium mobilization and MAPK1/MAPK3 (ERK1/2) phosphorylation too. Acts also as a receptor for TAFA1, mediates its effects on neuronal stem-cell proliferation and differentiation via the activation of ROCK/ERK and ROCK/STAT3 signaling pathway. The sequence is that of Chemerin-like receptor 2 (Cmklr2) from Rattus norvegicus (Rat).